Reading from the N-terminus, the 728-residue chain is U-box domain-containing protein 4 (728 aa).

The U-box domain occupies 296-370 (SVPKEFSCPI…SQWCGVYGLQ (75 aa)). ARM repeat units follow at residues 441–483 (GAIP…EQEG) and 526–568 (GAVE…ESCA).

It catalyses the reaction S-ubiquitinyl-[E2 ubiquitin-conjugating enzyme]-L-cysteine + [acceptor protein]-L-lysine = [E2 ubiquitin-conjugating enzyme]-L-cysteine + N(6)-ubiquitinyl-[acceptor protein]-L-lysine.. It functions in the pathway protein modification; protein ubiquitination. Functionally, possesses E3 ubiquitin-protein ligase in vitro. The chain is U-box domain-containing protein 4 (PUB4) from Oryza sativa subsp. japonica (Rice).